The primary structure comprises 174 residues: Shikimate kinase (174 aa).

Gly-15–Thr-20 serves as a coordination point for ATP. Ser-19 provides a ligand contact to Mg(2+). 3 residues coordinate substrate: Asp-37, Arg-61, and Gly-82. Arg-120 is an ATP binding site. Arg-138 contributes to the substrate binding site.

The protein belongs to the shikimate kinase family. Monomer. Mg(2+) serves as cofactor.

The protein resides in the cytoplasm. The enzyme catalyses shikimate + ATP = 3-phosphoshikimate + ADP + H(+). It participates in metabolic intermediate biosynthesis; chorismate biosynthesis; chorismate from D-erythrose 4-phosphate and phosphoenolpyruvate: step 5/7. Catalyzes the specific phosphorylation of the 3-hydroxyl group of shikimic acid using ATP as a cosubstrate. This chain is Shikimate kinase, found in Staphylococcus aureus (strain Mu3 / ATCC 700698).